The sequence spans 480 residues: uncharacterized protein (480 aa).

Residues 7 to 28 (HVISIFETFGAYFINIFYNFLY) traverse the membrane as a helical segment. N-linked (GlcNAc...) asparagine; by host glycosylation is found at Asn73 and Asn195. Positions 195–235 (NRSLLYQIEELTSEKKSLLAELSTLRKKYEKRQSEYRRLVQ) form a coiled coil. The disordered stretch occupies residues 297 to 332 (ELTSKSPSNYPVPQSRTIVSKPSDNYPVPQSRSSKI). Over residues 301-329 (KSPSNYPVPQSRTIVSKPSDNYPVPQSRS) the composition is skewed to polar residues. A glycan (N-linked (GlcNAc...) asparagine; by host) is linked at Asn455.

This sequence belongs to the asfivirus B475L family.

The protein localises to the host membrane. This is an uncharacterized protein from African swine fever virus (isolate Pig/Kenya/KEN-50/1950) (ASFV).